The sequence spans 367 residues: Type II methyltransferase M.CviJI (367 aa).

The 365-residue stretch at 3-367 (FRTLELFAGI…EYLGYLVQYD (365 aa)) folds into the SAM-dependent MTase C5-type domain. Cys73 is a catalytic residue.

The protein belongs to the class I-like SAM-binding methyltransferase superfamily. C5-methyltransferase family.

The catalysed reaction is a 2'-deoxycytidine in DNA + S-adenosyl-L-methionine = a 5-methyl-2'-deoxycytidine in DNA + S-adenosyl-L-homocysteine + H(+). Its function is as follows. A methylase that recognizes the double-stranded sequence 5'-RGCY-3', methylates C-3 on both strands, and protects the DNA from cleavage by the CviJI endonuclease. This chain is Type II methyltransferase M.CviJI, found in Chlorella (PBCV-IL3A).